A 245-amino-acid chain; its full sequence is NLP effector protein Pc118551 (245 aa).

An N-terminal signal peptide occupies residues 1–19 (MNLRAFLLSAVAALVAVQA). The Hepta-peptide GHRHDWE motif signature appears at 121 to 127 (QRRHLWE). N140 is a glycosylation site (N-linked (GlcNAc...) asparagine).

It belongs to the Necrosis inducing protein (NPP1) family.

The protein resides in the secreted. Functionally, secreted effector that contributes strongly to virulence during infection by P.capsici. This chain is NLP effector protein Pc118551, found in Phytophthora capsici.